The following is a 287-amino-acid chain: Pyridoxal 5'-phosphate synthase subunit PdxS (287 aa).

Residue Asp21 coordinates D-ribose 5-phosphate. The active-site Schiff-base intermediate with D-ribose 5-phosphate is the Lys78. Residue Gly150 coordinates D-ribose 5-phosphate. Arg162 contacts D-glyceraldehyde 3-phosphate. D-ribose 5-phosphate-binding positions include Gly211 and 232 to 233 (GS).

The protein belongs to the PdxS/SNZ family. As to quaternary structure, in the presence of PdxT, forms a dodecamer of heterodimers.

The enzyme catalyses aldehydo-D-ribose 5-phosphate + D-glyceraldehyde 3-phosphate + L-glutamine = pyridoxal 5'-phosphate + L-glutamate + phosphate + 3 H2O + H(+). Its pathway is cofactor biosynthesis; pyridoxal 5'-phosphate biosynthesis. Functionally, catalyzes the formation of pyridoxal 5'-phosphate from ribose 5-phosphate (RBP), glyceraldehyde 3-phosphate (G3P) and ammonia. The ammonia is provided by the PdxT subunit. Can also use ribulose 5-phosphate and dihydroxyacetone phosphate as substrates, resulting from enzyme-catalyzed isomerization of RBP and G3P, respectively. The chain is Pyridoxal 5'-phosphate synthase subunit PdxS from Francisella philomiragia subsp. philomiragia (strain ATCC 25017 / CCUG 19701 / FSC 153 / O#319-036).